A 109-amino-acid polypeptide reads, in one-letter code: Archaeosine synthase (109 aa).

The active-site Thioimide intermediate is Cys-21. Residue Asp-28 is the Proton donor/acceptor of the active site. Residues Asp-28, 43–46 (LAIE), and 62–63 (HE) contribute to the substrate site.

Belongs to the archaeosine synthase type 2 family. In terms of assembly, forms a symmetric tunnel-fold (T-fold) homodecamer of two head-to-head facing pentameric subunits, with 10 active sites at the intermonomer interfaces.

It carries out the reaction 7-cyano-7-carbaguanosine(15) in tRNA + NH4(+) = archaeosine(15) in tRNA. It functions in the pathway tRNA modification; archaeosine-tRNA biosynthesis. Is responsible for the final step in the biosynthesis of archaeosine, a modified nucleoside present in the dihydrouridine loop (D-loop) of archaeal tRNA. Catalyzes the conversion of 7-cyano-7-deazaguanine (preQ0)-modified tRNA to archaeosine-tRNA, transforming a nitrile group to a formamidine group. Can use neither glutamine nor asparagine as amino donor in vitro, is only able to utilize free ammonium. However, the enzyme might function in vivo with a partner that serves to generate ammonium. The sequence is that of Archaeosine synthase from Pyrobaculum calidifontis (strain DSM 21063 / JCM 11548 / VA1).